The primary structure comprises 355 residues: Phosphoserine aminotransferase (355 aa).

Residue Arg-41 participates in L-glutamate binding. Pyridoxal 5'-phosphate-binding positions include 75-76 (AS), Trp-99, Thr-147, Asp-166, and Gln-189. N6-(pyridoxal phosphate)lysine is present on Lys-190. Pyridoxal 5'-phosphate is bound at residue 231 to 232 (NT).

This sequence belongs to the class-V pyridoxal-phosphate-dependent aminotransferase family. SerC subfamily. As to quaternary structure, homodimer. It depends on pyridoxal 5'-phosphate as a cofactor.

Its subcellular location is the cytoplasm. The catalysed reaction is O-phospho-L-serine + 2-oxoglutarate = 3-phosphooxypyruvate + L-glutamate. It carries out the reaction 4-(phosphooxy)-L-threonine + 2-oxoglutarate = (R)-3-hydroxy-2-oxo-4-phosphooxybutanoate + L-glutamate. It functions in the pathway amino-acid biosynthesis; L-serine biosynthesis; L-serine from 3-phospho-D-glycerate: step 2/3. The protein operates within cofactor biosynthesis; pyridoxine 5'-phosphate biosynthesis; pyridoxine 5'-phosphate from D-erythrose 4-phosphate: step 3/5. In terms of biological role, catalyzes the reversible conversion of 3-phosphohydroxypyruvate to phosphoserine and of 3-hydroxy-2-oxo-4-phosphonooxybutanoate to phosphohydroxythreonine. The sequence is that of Phosphoserine aminotransferase from Bacteroides thetaiotaomicron (strain ATCC 29148 / DSM 2079 / JCM 5827 / CCUG 10774 / NCTC 10582 / VPI-5482 / E50).